The sequence spans 360 residues: Protein Wnt-2 (360 aa).

The signal sequence occupies residues 1-25; sequence MNAPLGGIWLWLPLLLTWLTPEVNS. Cystine bridges form between C76-C87, C127-C135, C137-C157, C206-C220, C208-C215, C278-C309, C294-C304, C308-C348, C324-C339, C326-C336, and C331-C332. Residue S212 is the site of O-palmitoleoyl serine; by PORCN attachment. N295 is a glycosylation site (N-linked (GlcNAc...) asparagine).

Belongs to the Wnt family. Post-translationally, palmitoleoylation is required for efficient binding to frizzled receptors. Depalmitoleoylation leads to Wnt signaling pathway inhibition.

The protein localises to the secreted. It is found in the extracellular space. Its subcellular location is the extracellular matrix. In terms of biological role, ligand for members of the frizzled family of seven transmembrane receptors. Functions in the canonical Wnt signaling pathway that results in activation of transcription factors of the TCF/LEF family. Functions as a upstream regulator of FGF10 expression. Plays an important role in embryonic lung development. May contribute to embryonic brain development by regulating the proliferation of dopaminergic precursors and neurons. In Gorilla gorilla gorilla (Western lowland gorilla), this protein is Protein Wnt-2 (WNT2).